We begin with the raw amino-acid sequence, 597 residues long: Elongation factor 4 (597 aa).

The region spanning 2 to 184 (DHIRNFSIIA…SLIAKVPPPK (183 aa)) is the tr-type G domain. GTP-binding positions include 14 to 19 (DHGKST) and 131 to 134 (NKID).

The protein belongs to the TRAFAC class translation factor GTPase superfamily. Classic translation factor GTPase family. LepA subfamily.

It localises to the cell inner membrane. The catalysed reaction is GTP + H2O = GDP + phosphate + H(+). Required for accurate and efficient protein synthesis under certain stress conditions. May act as a fidelity factor of the translation reaction, by catalyzing a one-codon backward translocation of tRNAs on improperly translocated ribosomes. Back-translocation proceeds from a post-translocation (POST) complex to a pre-translocation (PRE) complex, thus giving elongation factor G a second chance to translocate the tRNAs correctly. Binds to ribosomes in a GTP-dependent manner. The sequence is that of Elongation factor 4 from Burkholderia pseudomallei (strain 1710b).